A 948-amino-acid chain; its full sequence is Isoleucine--tRNA ligase (948 aa).

Residues 58-68 (PYANGDIHIGH) carry the 'HIGH' region motif. L-isoleucyl-5'-AMP is bound at residue E566. Positions 607–611 (KMSKS) match the 'KMSKS' region motif. Position 610 (K610) interacts with ATP. C911, C914, C931, and C934 together coordinate Zn(2+).

This sequence belongs to the class-I aminoacyl-tRNA synthetase family. IleS type 1 subfamily. In terms of assembly, monomer. Zn(2+) is required as a cofactor.

It is found in the cytoplasm. It carries out the reaction tRNA(Ile) + L-isoleucine + ATP = L-isoleucyl-tRNA(Ile) + AMP + diphosphate. In terms of biological role, catalyzes the attachment of isoleucine to tRNA(Ile). As IleRS can inadvertently accommodate and process structurally similar amino acids such as valine, to avoid such errors it has two additional distinct tRNA(Ile)-dependent editing activities. One activity is designated as 'pretransfer' editing and involves the hydrolysis of activated Val-AMP. The other activity is designated 'posttransfer' editing and involves deacylation of mischarged Val-tRNA(Ile). This is Isoleucine--tRNA ligase from Vibrio vulnificus (strain YJ016).